The following is a 442-amino-acid chain: tRNA-2-methylthio-N(6)-dimethylallyladenosine synthase (442 aa).

Residues 2-120 (KKVFIRTFGC…LPKMIVDKET (119 aa)) enclose the MTTase N-terminal domain. Residues cysteine 11, cysteine 49, cysteine 83, cysteine 157, cysteine 161, and cysteine 164 each coordinate [4Fe-4S] cluster. The Radical SAM core domain occupies 143 to 375 (RVEGGAAFVS…NEVIEAETAR (233 aa)). The TRAM domain maps to 378-441 (QTMIGTVQRC…TFSLRGKVVE (64 aa)).

The protein belongs to the methylthiotransferase family. MiaB subfamily. As to quaternary structure, monomer. [4Fe-4S] cluster is required as a cofactor.

The protein resides in the cytoplasm. The enzyme catalyses N(6)-dimethylallyladenosine(37) in tRNA + (sulfur carrier)-SH + AH2 + 2 S-adenosyl-L-methionine = 2-methylsulfanyl-N(6)-dimethylallyladenosine(37) in tRNA + (sulfur carrier)-H + 5'-deoxyadenosine + L-methionine + A + S-adenosyl-L-homocysteine + 2 H(+). Catalyzes the methylthiolation of N6-(dimethylallyl)adenosine (i(6)A), leading to the formation of 2-methylthio-N6-(dimethylallyl)adenosine (ms(2)i(6)A) at position 37 in tRNAs that read codons beginning with uridine. This Neisseria meningitidis serogroup C / serotype 2a (strain ATCC 700532 / DSM 15464 / FAM18) protein is tRNA-2-methylthio-N(6)-dimethylallyladenosine synthase.